We begin with the raw amino-acid sequence, 600 residues long: Monooxygenase ptmN (600 aa).

The protein belongs to the FMO family. It depends on FAD as a cofactor.

The protein operates within secondary metabolite biosynthesis. Monooxygenase; part of the gene cluster that mediates the biosynthesis of the indole diterpenes penitrems. The geranylgeranyl diphosphate (GGPP) synthase ptmG catalyzes the first step in penitrem biosynthesis via conversion of farnesyl pyrophosphate and isopentyl pyrophosphate into geranylgeranyl pyrophosphate (GGPP). Condensation of indole-3-glycerol phosphate with GGPP by the prenyl transferase ptmC then forms 3-geranylgeranylindole (3-GGI). Epoxidation by the FAD-dependent monooxygenase ptmM leads to a epoxidized-GGI that is substrate of the terpene cyclase ptmB for cyclization to yield paspaline. Paspaline is subsequently converted to 13-desoxypaxilline by the cytochrome P450 monooxygenase ptmP, the latter being then converted to paxilline by the cytochrome P450 monooxygenase ptmQ. Paxilline is converted to beta-paxitriol via C-10 ketoreduction by the short-chain dehydrogenase ptmH which can be monoprenylated at the C-20 by the indole diterpene prenyltransferase ptmD. A two-step elimination (acetylation and elimination) process performed by the O-acetyltransferase ptmV and ptmI leads to the production of the prenylated form of penijanthine. The FAD-linked oxidoreductase ptmO then converts the prenylated form of penijanthine into PC-M5 which is in turn transformed into PC-M4 by the aromatic dimethylallyltransferase ptmE. Five sequential oxidative transformations performed by the cytochrome P450 monooxygenases ptmK, ptmU, ptmL, ptmN and ptmJ yield the various penitrem compounds. PtmK, ptmU and ptmM are involved in the formation of the key bicyclic ring of penitrem C via the formation of the intermediates secopenitrem D and penitrem D. PtmL catalyzes the epoxidation of penitrem D and C to yield penitrem B and F, respectively. PtmJ catalyzes the last benzylic hydroxylation to convert penitrem B to prenitrem E and penitrem F to penitrem A. The sequence is that of Monooxygenase ptmN from Penicillium ochrochloron.